The chain runs to 937 residues: Isoleucine--tRNA ligase (937 aa).

A 'HIGH' region motif is present at residues 58 to 68 (PYANGSIHIGH). Residue Glu-561 coordinates L-isoleucyl-5'-AMP. Positions 602–606 (KMSKS) match the 'KMSKS' region motif. Lys-605 contributes to the ATP binding site. Zn(2+) is bound by residues Cys-900, Cys-903, Cys-920, and Cys-923.

Belongs to the class-I aminoacyl-tRNA synthetase family. IleS type 1 subfamily. As to quaternary structure, monomer. Requires Zn(2+) as cofactor.

The protein localises to the cytoplasm. The catalysed reaction is tRNA(Ile) + L-isoleucine + ATP = L-isoleucyl-tRNA(Ile) + AMP + diphosphate. In terms of biological role, catalyzes the attachment of isoleucine to tRNA(Ile). As IleRS can inadvertently accommodate and process structurally similar amino acids such as valine, to avoid such errors it has two additional distinct tRNA(Ile)-dependent editing activities. One activity is designated as 'pretransfer' editing and involves the hydrolysis of activated Val-AMP. The other activity is designated 'posttransfer' editing and involves deacylation of mischarged Val-tRNA(Ile). In Pectobacterium carotovorum subsp. carotovorum (strain PC1), this protein is Isoleucine--tRNA ligase.